Consider the following 210-residue polypeptide: Na(+)-translocating NADH-quinone reductase subunit D (210 aa).

A run of 6 helical transmembrane segments spans residues 10 to 30 (VLIG…GVCS), 42 to 62 (LVMT…ISLI), 72 to 92 (IIVQ…VLQA), 103 to 123 (VFVG…AYAM), 131 to 151 (FMDG…VGFV), and 178 to 198 (NGLL…IWII).

Belongs to the NqrDE/RnfAE family. Composed of six subunits; NqrA, NqrB, NqrC, NqrD, NqrE and NqrF.

The protein localises to the cell inner membrane. The catalysed reaction is a ubiquinone + n Na(+)(in) + NADH + H(+) = a ubiquinol + n Na(+)(out) + NAD(+). In terms of biological role, NQR complex catalyzes the reduction of ubiquinone-1 to ubiquinol by two successive reactions, coupled with the transport of Na(+) ions from the cytoplasm to the periplasm. NqrA to NqrE are probably involved in the second step, the conversion of ubisemiquinone to ubiquinol. This chain is Na(+)-translocating NADH-quinone reductase subunit D, found in Shewanella pealeana (strain ATCC 700345 / ANG-SQ1).